Consider the following 407-residue polypeptide: Nicotinate phosphoribosyltransferase (407 aa).

His228 is subject to Phosphohistidine; by autocatalysis.

Belongs to the NAPRTase family. Transiently phosphorylated on a His residue during the reaction cycle. Phosphorylation strongly increases the affinity for substrates and increases the rate of nicotinate D-ribonucleotide production. Dephosphorylation regenerates the low-affinity form of the enzyme, leading to product release.

It carries out the reaction nicotinate + 5-phospho-alpha-D-ribose 1-diphosphate + ATP + H2O = nicotinate beta-D-ribonucleotide + ADP + phosphate + diphosphate. Its pathway is cofactor biosynthesis; NAD(+) biosynthesis; nicotinate D-ribonucleotide from nicotinate: step 1/1. With respect to regulation, 100-fold more active in the presence of saturating ATP. Its function is as follows. Catalyzes the synthesis of beta-nicotinate D-ribonucleotide from nicotinate and 5-phospho-D-ribose 1-phosphate at the expense of ATP. Functions in the deamidating salvage pathway for production of NAD from nicotinamide. Displays a strict preference for nicotinate over nicotinamide substrate. The sequence is that of Nicotinate phosphoribosyltransferase from Acinetobacter baylyi (strain ATCC 33305 / BD413 / ADP1).